Here is a 134-residue protein sequence, read N- to C-terminus: Cytochrome b (134 aa).

The next 3 membrane-spanning stretches (helical) occupy residues 33–53 (FGSL…FLAI), 77–98 (WLLR…YLHV), and 113–133 (WNIG…GYVL). Residues H83 and H97 each coordinate heme b.

The protein belongs to the cytochrome b family. The cytochrome bc1 complex contains 11 subunits: 3 respiratory subunits (MT-CYB, CYC1 and UQCRFS1), 2 core proteins (UQCRC1 and UQCRC2) and 6 low-molecular weight proteins (UQCRH/QCR6, UQCRB/QCR7, UQCRQ/QCR8, UQCR10/QCR9, UQCR11/QCR10 and a cleavage product of UQCRFS1). This cytochrome bc1 complex then forms a dimer. Requires heme b as cofactor.

Its subcellular location is the mitochondrion inner membrane. In terms of biological role, component of the ubiquinol-cytochrome c reductase complex (complex III or cytochrome b-c1 complex) that is part of the mitochondrial respiratory chain. The b-c1 complex mediates electron transfer from ubiquinol to cytochrome c. Contributes to the generation of a proton gradient across the mitochondrial membrane that is then used for ATP synthesis. The protein is Cytochrome b (MT-CYB) of Platyrrhinus helleri (Heller's broad-nosed bat).